Consider the following 389-residue polypeptide: N-terminal EF-hand calcium-binding protein 2 (389 aa).

Arginine 10 is modified (omega-N-methylarginine). Arginine 42 carries the asymmetric dimethylarginine modification. 2 EF-hand domains span residues 63–98 (GGTAVILDIFRRADKNDDGKLSLEEFQLFFADGVLN) and 99–132 (EKELEGLFHTIDSDNTNHVDTKELCDYFVEHMGD). Aspartate 76, asparagine 78, aspartate 80, lysine 82, glutamate 87, aspartate 110, aspartate 112, threonine 114, histidine 116, and glutamate 121 together coordinate Ca(2+). The stretch at 173-198 (LKETANQIQSLLSSVESAVEAIEEQT) forms a coiled coil. The ABM domain maps to 289-377 (QLVRQEMAVC…LSQPEALSQI (89 aa)).

In terms of assembly, interacts (calcium-dependent) with ADORA2A and GRM5. Expressed in the iris, in the ciliary margin of the retina and in the inner portion of the neural retina. Expressed in the spinal dorsal horn with especially strong expression in lamina IIi; found in excitory synaptic boutons (at protein level).

The protein resides in the cytoplasm. It is found in the cell projection. It localises to the dendrite. The protein localises to the axon. Its subcellular location is the cell membrane. May act as a signaling scaffold protein that senses intracellular calcium. Can modulate ligand-induced internalization of ADORA2A and coupling efficiency of mGluR5/GRM5; for both receptors may regulate signaling activity such as promoting MAPK1/3 (ERK1/2) activation. The chain is N-terminal EF-hand calcium-binding protein 2 (Necab2) from Mus musculus (Mouse).